The sequence spans 61 residues: uncharacterized protein (61 aa).

This is an uncharacterized protein from Escherichia coli O6:K15:H31 (strain 536 / UPEC).